Reading from the N-terminus, the 189-residue chain is Glycerol-3-phosphate acyltransferase (189 aa).

Helical transmembrane passes span 1–21 (MVWL…AILL), 79–99 (QQAW…YFNF), 113–133 (LGLY…VFAF), and 151–171 (LLAW…GVIV).

Belongs to the PlsY family. As to quaternary structure, probably interacts with PlsX.

Its subcellular location is the cell inner membrane. It carries out the reaction an acyl phosphate + sn-glycerol 3-phosphate = a 1-acyl-sn-glycero-3-phosphate + phosphate. Its pathway is lipid metabolism; phospholipid metabolism. In terms of biological role, catalyzes the transfer of an acyl group from acyl-phosphate (acyl-PO(4)) to glycerol-3-phosphate (G3P) to form lysophosphatidic acid (LPA). This enzyme utilizes acyl-phosphate as fatty acyl donor, but not acyl-CoA or acyl-ACP. The polypeptide is Glycerol-3-phosphate acyltransferase (Azotobacter vinelandii (strain DJ / ATCC BAA-1303)).